A 121-amino-acid chain; its full sequence is MRRQKGMTLVEVLVALSVFALAGIAVLQTTARQASSLSRLEEKTFAGWVAENQQVQLRLEQRWPEASWVRGETQFAGLRWHWRWQGVETGDPQTKALDVEVRRNKDAFAADASLRTYVVKQ.

Residues 1–6 constitute a propeptide, leader sequence; that stretch reads MRRQKG. N-methylmethionine is present on Met7. Residues 7–27 form a helical membrane-spanning segment; sequence MTLVEVLVALSVFALAGIAVL.

The protein belongs to the GSP I family. Type II secretion is composed of four main components: the outer membrane complex, the inner membrane complex, the cytoplasmic secretion ATPase and the periplasm-spanning pseudopilus. Interacts with core component OutG. In terms of processing, cleaved by prepilin peptidase. Methylated by prepilin peptidase at the amino group of the N-terminal methionine once the leader sequence is cleaved by prepilin peptidase.

The protein localises to the cell inner membrane. In terms of biological role, component of the type II secretion system required for the energy-dependent secretion of extracellular factors such as proteases and toxins from the periplasm. Part of the pseudopilus tip complex that is critical for the recognition and binding of secretion substrates. This Pectobacterium carotovorum subsp. carotovorum (Erwinia carotovora subsp. carotovora) protein is Type II secretion system protein I (outI).